A 426-amino-acid chain; its full sequence is MKIVPPRGMQDFLPHEKEHRDRITEVIYKSYISHGFNPIETPSLENIERLACGVGQENEKLTYKIIRRGLTGAQTVQHPDELIDLGLRFDLTIPLVRFWNTNRARLPKIFRSLQIGHVWRAEKPQKGRRRQFIQCDIDIIGQPEILAEIELLVATLSTLEQLGIRTPKLHINDRRILFSMLNNLGVPHSCHVYVSIVLDKLRKIGLDLVKQELCEFPALVAYLASSVNSNTGSTDLCFDVSSTKDITHIRRTIQSALPHGCKFDCEDLCRIIASVNEFTQTGVFFDPLLVRGMGYYTGPIFEILHDDYSIAGGGRYDGLVERLGGLPTPACGFSIGFERVLGLIKESVSLDPKKMILLYDPKVDPNLVVSVKLEFISKGFIVRPELASRSRRNQIELAKREGFGAFLYLDPLSPPDGLLAKVKPIL.

The protein belongs to the class-II aminoacyl-tRNA synthetase family. As to quaternary structure, homodimer.

The protein resides in the cytoplasm. The catalysed reaction is tRNA(His) + L-histidine + ATP = L-histidyl-tRNA(His) + AMP + diphosphate + H(+). This is Probable histidine--tRNA ligase (hisS) from Tropheryma whipplei (strain TW08/27) (Whipple's bacillus).